Here is a 171-residue protein sequence, read N- to C-terminus: Shikimate kinase (171 aa).

14–19 (GAGKST) is an ATP binding site. Ser18 is a Mg(2+) binding site. Substrate-binding residues include Asp36, Arg60, and Gly82. Arg120 is an ATP binding site. Arg139 lines the substrate pocket. Residue Gln156 coordinates ATP.

It belongs to the shikimate kinase family. As to quaternary structure, monomer. Mg(2+) serves as cofactor.

It localises to the cytoplasm. The enzyme catalyses shikimate + ATP = 3-phosphoshikimate + ADP + H(+). The protein operates within metabolic intermediate biosynthesis; chorismate biosynthesis; chorismate from D-erythrose 4-phosphate and phosphoenolpyruvate: step 5/7. Catalyzes the specific phosphorylation of the 3-hydroxyl group of shikimic acid using ATP as a cosubstrate. This Shewanella sp. (strain MR-4) protein is Shikimate kinase.